The primary structure comprises 323 residues: Voltage-dependent calcium channel gamma-2 subunit (323 aa).

Residues 10 to 30 traverse the membrane as a helical segment; sequence MLLTTVGAFAAFSLMTIAVGT. A glycan (N-linked (GlcNAc...) asparagine) is linked at asparagine 48. The next 3 helical transmembrane spans lie at 104–124, 134–154, and 182–202; these read SSIFPILSVILLFMGGLCIAA, IILSAGIFFVSAGLSNIIGII, and FGALSFIIAEMVGVLAVHMFI. Residues 233–261 are disordered; sequence YQRRSRSSSRSTEPSHSRDASPVGVKGFN. The residue at position 253 (serine 253) is a Phosphoserine. Tyrosine 271 bears the Phosphotyrosine mark. Position 321 is a phosphothreonine; by PKA (threonine 321).

This sequence belongs to the PMP-22/EMP/MP20 family. CACNG subfamily. The L-type calcium channel is composed of five subunits: alpha-1, alpha-2/delta, beta and gamma. Interacts with the PDZ domains of DLG4/PSD-95 and DLG1/SAP97. May interact with GOPC. Acts as an auxiliary subunit for AMPA-selective glutamate receptors (AMPARs). Found in a complex with GRIA1, GRIA2, GRIA3, GRIA4, CNIH2, CNIH3, CACNG3, CACNG4, CACNG5, CACNG7 and CACNG8. Interacts with GRIA1 and GRIA2. Interacts with MPP2. Phosphorylation of Thr-321 by PKA impairs interaction with DLG1 and DLG4. Brain.

The protein localises to the membrane. It is found in the synapse. Its subcellular location is the synaptosome. In terms of biological role, regulates the trafficking and gating properties of AMPA-selective glutamate receptors (AMPARs). Promotes their targeting to the cell membrane and synapses and modulates their gating properties by slowing their rates of activation, deactivation and desensitization. Does not show subunit-specific AMPA receptor regulation and regulates all AMPAR subunits. Thought to stabilize the calcium channel in an inactivated (closed) state. The protein is Voltage-dependent calcium channel gamma-2 subunit (Cacng2) of Mus musculus (Mouse).